Consider the following 105-residue polypeptide: MPEKYAFKMKLKPGMKAEYKKRHDEIWPSLVSLLKQAGVSDYSIHLDEETNILFGVLWRRDHHGMAELPKQPVMQRWWADMADIMETGPDNEPVAVPLETMFHMA.

A substrate-binding site is contributed by Tyr19. The Proton donor role is filled by His23. Substrate contacts are provided by residues Tyr42 and 77–78 (WW).

It belongs to the rhamnose mutarotase family. In terms of assembly, homodimer.

The protein resides in the cytoplasm. It catalyses the reaction alpha-L-rhamnose = beta-L-rhamnose. The protein operates within carbohydrate metabolism; L-rhamnose metabolism. Its function is as follows. Involved in the anomeric conversion of L-rhamnose. The polypeptide is L-rhamnose mutarotase (Mesorhizobium japonicum (strain LMG 29417 / CECT 9101 / MAFF 303099) (Mesorhizobium loti (strain MAFF 303099))).